A 196-amino-acid polypeptide reads, in one-letter code: Gastrula zinc finger protein xLCGF3.1 (196 aa).

C2H2-type zinc fingers lie at residues 6–28 (FMCT…HMTH), 34–56 (FTCT…QTIH), 62–84 (FTCI…YMTH), 90–112 (FTCT…QTMH), 118–140 (LTCT…QRVH), 146–168 (FTCT…QTVH), and 174–196 (FTCT…QIVH).

This sequence belongs to the krueppel C2H2-type zinc-finger protein family.

Its subcellular location is the nucleus. Functionally, may be involved in transcriptional regulation. This is Gastrula zinc finger protein xLCGF3.1 from Xenopus laevis (African clawed frog).